The sequence spans 311 residues: Malate dehydrogenase (311 aa).

NAD(+) is bound by residues 7-13 (GAAGGIG) and aspartate 34. Arginine 81 and arginine 87 together coordinate substrate. Residues asparagine 94 and 117 to 119 (ITN) each bind NAD(+). Residues asparagine 119 and arginine 153 each contribute to the substrate site. Residue histidine 177 is the Proton acceptor of the active site. Methionine 227 provides a ligand contact to NAD(+).

The protein belongs to the LDH/MDH superfamily. MDH type 1 family. As to quaternary structure, homodimer.

The enzyme catalyses (S)-malate + NAD(+) = oxaloacetate + NADH + H(+). Functionally, catalyzes the reversible oxidation of malate to oxaloacetate. This Shewanella pealeana (strain ATCC 700345 / ANG-SQ1) protein is Malate dehydrogenase.